The primary structure comprises 277 residues: MGIRSFRPLTPGTRQAAISDFKEITKTEPEKSLTHHKHSKQGRNNRGVVTSRHRGGGHKRLYRIIDFRRDKRDIPAKVAAIEYDPNRNARIALLFYKDGEKRYIIAPAGLGVGDTVIAGENAPFEVGNALPLSRIPLGTEVHNIELVPGRGGQMVRAAGGFAQVVAKEGDYVTIRLPSKEVRMIRRECYATIGKVGNAEARNISLGKAGRTRHRGQRPHVRGSVMNPVDHPHGGGEGRAPIGRSGPMTPWGKPALGRKTRNKKKRSSDLIVRRRTQG.

2 disordered regions span residues 28–55 (EPEK…RHRG) and 207–277 (KAGR…RTQG). Basic residues-rich tracts occupy residues 34 to 43 (THHKHSKQGR), 209 to 220 (GRTRHRGQRPHV), and 255 to 265 (LGRKTRNKKKR).

Belongs to the universal ribosomal protein uL2 family. In terms of assembly, part of the 50S ribosomal subunit. Forms a bridge to the 30S subunit in the 70S ribosome.

Functionally, one of the primary rRNA binding proteins. Required for association of the 30S and 50S subunits to form the 70S ribosome, for tRNA binding and peptide bond formation. It has been suggested to have peptidyltransferase activity; this is somewhat controversial. Makes several contacts with the 16S rRNA in the 70S ribosome. This is Large ribosomal subunit protein uL2 from Microcystis aeruginosa (strain NIES-843 / IAM M-2473).